A 1467-amino-acid polypeptide reads, in one-letter code: Neuropathy target esterase sws (1467 aa).

The Lumenal portion of the chain corresponds to 1 to 34 (MDVLEMLRASASGSYNTIFSDAWCQYVSKQITAT). A helical transmembrane segment spans residues 35–55 (MYMYCAFGLMGVLFLAWFMYF). Residues 56 to 1467 (KRLARLRLRD…RSSTYNETKN (1412 aa)) are Cytoplasmic-facing. Position 174–301 (174–301 (IFGHFEKPIF…IRVIQVIMIR (128 aa))) interacts with a nucleoside 3',5'-cyclic phosphate. Disordered stretches follow at residues 332–353 (TMSG…ANGP) and 372–416 (MGMG…SVHG). Low complexity predominate over residues 339–350 (SQTSQSSRQATA). A phosphoserine mark is found at Ser450 and Ser459. A nucleoside 3',5'-cyclic phosphate contacts are provided by residues 488 to 615 (ELGL…VVRR) and 604 to 731 (IVLD…LSHR). The PNPLA domain maps to 958–1124 (LVLGGGGARG…VNNLPGHLWR (167 aa)). The GXGXXG motif lies at 962-967 (GGGARG). The short motif at 989 to 993 (GVSIG) is the GXSXG element. Residue Ser991 is the Nucleophile of the active site. Asp1111 acts as the Proton acceptor in catalysis. A DGA/G motif is present at residues 1111–1113 (DGG). The residue at position 1205 (Ser1205) is a Phosphoserine. The tract at residues 1377-1467 (RKMDKSTQST…RSSTYNETKN (91 aa)) is disordered. The span at 1382–1393 (STQSTPPTSSRA) shows a compositional bias: polar residues. Composition is skewed to basic and acidic residues over residues 1396–1406 (RGKEEARHMDN) and 1448–1458 (LADKDEDKENR).

It belongs to the NTE family. Interacts with Pka-C3; interaction inhibits the catalytic function of Pka-C3 and the esterase activity of sws.

It localises to the endoplasmic reticulum membrane. The catalysed reaction is a 1-acyl-sn-glycero-3-phosphocholine + H2O = sn-glycerol 3-phosphocholine + a fatty acid + H(+). Its function is as follows. Phospholipase B that deacylates intracellular phosphatidylcholine (PtdCho), generating glycerophosphocholine (GroPtdCho). This deacylation occurs at both sn-2 and sn-1 positions of PtdCho. Its specific chemical modification by certain organophosphorus (OP) compounds leads to distal axonopathy. Plays a role in the signaling mechanism between neurons and glia that regulates glia wrapping during development of the adult brain. Essential for membrane lipid homeostasis and cell survival in both neurons and glia of the adult brain. This chain is Neuropathy target esterase sws, found in Drosophila yakuba (Fruit fly).